The sequence spans 863 residues: Ribosomal protein S6 kinase alpha-5 (863 aa).

The span at 1-21 (MEGEGGGSGGAGTSGDSGDGG) shows a compositional bias: gly residues. Residues 1 to 22 (MEGEGGGSGGAGTSGDSGDGGE) form a disordered region. Positions 48-317 (FELLKVLGTG…AEEIKEHLFF (270 aa)) constitute a Protein kinase 1 domain. Residues 54–62 (LGTGAYGKV) and Lys-80 each bind ATP. Asp-176 (proton acceptor) is an active-site residue. Residue Ser-211 is modified to Phosphoserine; by autocatalysis. Positions 318–386 (EKIKWDDLAA…VAPSILFKRN (69 aa)) constitute an AGC-kinase C-terminal domain. Position 359 is a phosphoserine; by MAPK1, MAPK3 and MAPK14 (Ser-359). Phosphoserine; by autocatalysis occurs at positions 375 and 380. Residues 428 to 675 (DKPLGEGSFS…SCDLWSLGVI (248 aa)) enclose the Protein kinase 2 domain. ATP is bound by residues 431–440 (LGEGSFSICR) and Lys-454. Asp-608 (proton acceptor) is an active-site residue. Phosphothreonine; by MAPK1, MAPK3 and MAPK14 is present on Thr-645. Phosphoserine is present on residues Ser-711, Ser-721, Ser-755, and Ser-759. Position 764 is a phosphothreonine (Thr-764). Residues 805–863 (AKRRKMKRTSTSTETRSSSSESSRSSSSQSHGKTTPTKTLQPSNPTEGSNPDTLFQFSD) are disordered. Positions 813–832 (TSTSTETRSSSSESSRSSSS) are enriched in low complexity. Phosphoserine; by autocatalysis is present on residues Ser-814, Ser-816, and Ser-822. Positions 833–863 (QSHGKTTPTKTLQPSNPTEGSNPDTLFQFSD) are enriched in polar residues. Ser-862 is subject to Phosphoserine.

The protein belongs to the protein kinase superfamily. AGC Ser/Thr protein kinase family. S6 kinase subfamily. Forms a complex with either MAPK1/ERK2 or MAPK3/ERK1 in quiescent cells which transiently dissociates following mitogenic stimulation. Also associates with MAPK14/p38-alpha. Activated RPS6KA5 associates with and phosphorylates the NF-kappa-B p65 subunit RELA. Interacts with CREBBP and EP300. Mg(2+) serves as cofactor. Ser-375 and Thr-645 phosphorylation is required for kinase activity. Ser-375 and Ser-211 are autophosphorylated by the C-terminal kinase domain, and their phosphorylation is essential for the catalytic activity of the N-terminal kinase domain. Phosphorylated at Ser-359, Thr-645 and Thr-764 by MAPK1/ERK2, MAPK3/ERK1 and MAPK14/p38-alpha. Autophosphorylated at Ser-814, Ser-816 and Ser-822 by the N-terminal kinase domain. In terms of processing, ubiquitinated.

Its subcellular location is the nucleus. The enzyme catalyses L-seryl-[protein] + ATP = O-phospho-L-seryl-[protein] + ADP + H(+). The catalysed reaction is L-threonyl-[protein] + ATP = O-phospho-L-threonyl-[protein] + ADP + H(+). Activated by phosphorylation at Ser-359, Thr-645 and Thr-764 by MAPK1/ERK2, MAPK3/ERK1 and MAPK14/p38-alpha, and by further autophosphorylation of Ser-211, Ser-375 and Ser-380 by the activated C-terminal kinase domain. The active N-terminal kinase domain finally phosphorylates downstream substrates, as well as Ser-814, Ser-816 and Ser-822 in its own C-terminal region. Its function is as follows. Serine/threonine-protein kinase that is required for the mitogen or stress-induced phosphorylation of the transcription factors CREB1 and ATF1 and for the regulation of the transcription factors RELA, STAT3 and ETV1/ER81, and that contributes to gene activation by histone phosphorylation and functions in the regulation of inflammatory genes. Phosphorylates CREB1 and ATF1 in response to mitogenic or stress stimuli such as UV-C irradiation, epidermal growth factor (EGF) and anisomycin. Plays an essential role in the control of RELA transcriptional activity in response to TNF and upon glucocorticoid, associates in the cytoplasm with the glucocorticoid receptor NR3C1 and contributes to RELA inhibition and repression of inflammatory gene expression. In skeletal myoblasts is required for phosphorylation of RELA at 'Ser-276' during oxidative stress. In erythropoietin-stimulated cells, is necessary for the 'Ser-727' phosphorylation of STAT3 and regulation of its transcriptional potential. Phosphorylates ETV1/ER81 at 'Ser-191' and 'Ser-216', and thereby regulates its ability to stimulate transcription, which may be important during development and breast tumor formation. Directly represses transcription via phosphorylation of 'Ser-1' of histone H2A. Phosphorylates 'Ser-10' of histone H3 in response to mitogenics, stress stimuli and EGF, which results in the transcriptional activation of several immediate early genes, including proto-oncogenes c-fos/FOS and c-jun/JUN. May also phosphorylate 'Ser-28' of histone H3. Mediates the mitogen- and stress-induced phosphorylation of high mobility group protein 1 (HMGN1/HMG14). In lipopolysaccharide-stimulated primary macrophages, acts downstream of the Toll-like receptor TLR4 to limit the production of pro-inflammatory cytokines. Functions probably by inducing transcription of the MAP kinase phosphatase DUSP1 and the anti-inflammatory cytokine interleukin 10 (IL10), via CREB1 and ATF1 transcription factors. Plays a role in neuronal cell death by mediating the downstream effects of excitotoxic injury. Phosphorylates TRIM7 at 'Ser-106' in response to growth factor signaling via the MEK/ERK pathway, thereby stimulating its ubiquitin ligase activity. This chain is Ribosomal protein S6 kinase alpha-5 (Rps6ka5), found in Mus musculus (Mouse).